The sequence spans 165 residues: Histone H1 (165 aa).

Positions 1–165 (GKQSTSKSVT…KKATKGSKKN (165 aa)) are disordered. The span at 9–18 (VTREKKDVKK) shows a compositional bias: basic and acidic residues. Over residues 20-31 (VAPKKAIKKVTK) the composition is skewed to basic residues. A compositionally biased stretch (low complexity) spans 32–41 (KSTTPVKTSK). A phosphothreonine mark is found at threonine 48 and threonine 54. Residues 68–89 (TMKESVSDAKKTVHKSAGDKKL) show a composition bias toward basic and acidic residues. At serine 83 the chain carries Phosphoserine. Basic residues predominate over residues 103–117 (KIVHPAKKAAAKPKT). Position 117 is a phosphothreonine (threonine 117). Over residues 118–157 (AKKEVKKDTKPVKKDAKKDTKPVKKDAKKDTKPAKKDTKK) the composition is skewed to basic and acidic residues.

Cell-growth/division-associated phosphorylation by a CDC2-like kinase. Is additionally phosphorylated on either Ser-33, Thr-34 or Thr-35, and on either Thr-39 or Ser-40.

It is found in the nucleus. The protein resides in the chromosome. Histones H1 are necessary for the condensation of nucleosome chains into higher-order structures. The chain is Histone H1 (HHO) from Tetrahymena pyriformis.